A 191-amino-acid polypeptide reads, in one-letter code: Prostaglandin-H2 D-isomerase (191 aa).

Positions 1–28 are cleaved as a signal peptide; sequence MATPNRLWMALLLLGVLGVLQTPAPAQA. Asn-51 is a glycosylation site (N-linked (GlcNAc...) asparagine). Cys-65 functions as the Nucleophile in the catalytic mechanism. Asn-78 carries N-linked (GlcNAc...) asparagine glycosylation. A disulfide bridge links Cys-89 with Cys-186.

It belongs to the calycin superfamily. Lipocalin family. As to quaternary structure, monomer. As to expression, in the male reproductive system, expressed in the testis, epididymis and prostate, and secreted into the seminal fluid.

The protein localises to the rough endoplasmic reticulum. The protein resides in the nucleus membrane. Its subcellular location is the golgi apparatus. It localises to the cytoplasm. It is found in the perinuclear region. The protein localises to the secreted. It carries out the reaction prostaglandin H2 = prostaglandin D2. Catalyzes the conversion of PGH2 to PGD2, a prostaglandin involved in smooth muscle contraction/relaxation and a potent inhibitor of platelet aggregation. Involved in a variety of CNS functions, such as sedation, NREM sleep and PGE2-induced allodynia, and may have an anti-apoptotic role in oligodendrocytes. Binds small non-substrate lipophilic molecules, including biliverdin, bilirubin, retinal, retinoic acid and thyroid hormone, and may act as a scavenger for harmful hydrophobic molecules and as a secretory retinoid and thyroid hormone transporter. Possibly involved in development and maintenance of the blood-brain, blood-retina, blood-aqueous humor and blood-testis barrier. It is likely to play important roles in both maturation and maintenance of the central nervous system and male reproductive system. Involved in PLA2G3-dependent maturation of mast cells. PLA2G3 is secreted by immature mast cells and acts on nearby fibroblasts upstream to PTDGS to synthesize PGD2, which in turn promotes mast cell maturation and degranulation via PTGDR. The protein is Prostaglandin-H2 D-isomerase (PTGDS) of Bos taurus (Bovine).